The primary structure comprises 389 residues: MNNPVIVDCIRTPMGRSKGGVFKNKRAEDLSAHLMKGLLDRNPAVDPASIDDIYWGCVQQTLEQGFNVARNAALLAGIPHSVPAVTVNRLCGSSMQALHDAARAIMTGAGDTYLIGGVEHMGHVPMTHGNDFHPGLATSIAQAAGSMGLTAEYLATLHGISREQQDEFAYRSHQRAQAATVEGRFRREILAMEGHAADGSLILVEDDEVIRPETTVEGLSKLRPVFNPASGTVTAGTSSALSDGASAMLVMSEAKAKELGLPIRARIKAMAVAGCDPSIMGYGPVPASKKALAQAGITIDDLGVVELNEAFAAQSLPVMKDLGLMDVVDEKVNLNGGAIALGHPLGCSGSRISTSLIHLMEDKNVRYGLATMCIGLGQGIATVFERVQD.

Cysteine 91 (acyl-thioester intermediate) is an active-site residue. Active-site proton acceptor residues include histidine 343 and cysteine 373.

This sequence belongs to the thiolase-like superfamily. Thiolase family. In terms of assembly, heterotetramer of two alpha chains (FadB) and two beta chains (FadA).

The protein resides in the cytoplasm. It catalyses the reaction an acyl-CoA + acetyl-CoA = a 3-oxoacyl-CoA + CoA. It functions in the pathway lipid metabolism; fatty acid beta-oxidation. Catalyzes the final step of fatty acid oxidation in which acetyl-CoA is released and the CoA ester of a fatty acid two carbons shorter is formed. The protein is 3-ketoacyl-CoA thiolase of Pseudoalteromonas translucida (strain TAC 125).